We begin with the raw amino-acid sequence, 570 residues long: Zinc finger protein 76 (570 aa).

Residue Lys-24 forms a Glycyl lysine isopeptide (Lys-Gly) (interchain with G-Cter in SUMO2) linkage. 3 repeat units span residues 34 to 45, 62 to 73, and 88 to 99. A 3 X 12 AA approximate repeats region spans residues 34-99; that stretch reads IQLEDGTTAY…LEDGSTAYIH (66 aa). 7 consecutive C2H2-type zinc fingers follow at residues 165–189, 195–219, 225–249, 255–279, 285–309, 315–339, and 345–368; these read FRCG…ERAH, YRCD…VRTH, YKCP…VRTH, FQCP…VRTH, YTCP…VRIH, YVCT…HVVH, and YTCS…RSAH. Positions 365–401 are disordered; it reads RSAHGELEATEESEQALYEQQQLEAASAAEESPPPKR. Low complexity predominate over residues 379-395; the sequence is QALYEQQQLEAASAAEE.

The protein belongs to the krueppel C2H2-type zinc-finger protein family. In terms of tissue distribution, testis.

It is found in the nucleus. Its function is as follows. May be involved in transcriptional regulation. The chain is Zinc finger protein 76 (ZNF76) from Homo sapiens (Human).